Consider the following 310-residue polypeptide: UPF0282 protein PF0593 (310 aa).

This sequence belongs to the UPF0282 family.

This is UPF0282 protein PF0593 from Pyrococcus furiosus (strain ATCC 43587 / DSM 3638 / JCM 8422 / Vc1).